Here is an 82-residue protein sequence, read N- to C-terminus: uncharacterized protein (82 aa).

The interval 22–82 (LRRSRSSRNG…WPPPCAFTPG (61 aa)) is disordered. The segment covering 47 to 58 (HRGEPGHPRMEE) has biased composition (basic and acidic residues). The segment covering 73–82 (WPPPCAFTPG) has biased composition (pro residues).

This is an uncharacterized protein from Homo sapiens (Human).